The following is a 442-amino-acid chain: Zinc finger protein sfp1 (442 aa).

A compositionally biased stretch (low complexity) spans 193 to 208; it reads AASSDMSSDEASSQAE. 2 disordered regions span residues 193-219 and 304-333; these read AASS…MPES and SPFV…HDSP. 2 consecutive C2H2-type zinc fingers follow at residues 350–375 and 399–422; these read YKCP…LHGH and YRCE…THSH.

It localises to the cytoplasm. It is found in the nucleus. This Schizosaccharomyces pombe (strain 972 / ATCC 24843) (Fission yeast) protein is Zinc finger protein sfp1 (sfp1).